The following is a 63-amino-acid chain: Metallothionein-1 (63 aa).

2 consecutive repeats follow at residues 23–30 (CGDKCECK) and 56–63 (CGDKCECK).

It belongs to the metallothionein superfamily. Type 9 family.

In terms of biological role, the metallothioneins are involved in the cellular sequestration of toxic metal ions. The protein is Metallothionein-1 (MT-I) of Candida glabrata (strain ATCC 2001 / BCRC 20586 / JCM 3761 / NBRC 0622 / NRRL Y-65 / CBS 138) (Yeast).